We begin with the raw amino-acid sequence, 750 residues long: Photosystem I P700 chlorophyll a apoprotein A1 (750 aa).

The next 8 helical transmembrane spans lie at 70–93 (VFSAHFGQLAVIFIWLSGMYFHGA), 156–179 (LYTTAIGGLIFAALMLFAGWFHYH), 195–219 (LNHHLAGLLGLGSLAWAGHQVHVSL), 291–309 (TAHHHLAIAVLFLVAGHMY), 346–369 (WHAQLAINLAMLGSLTIIVAHHMY), 385–411 (LSLFTHHMWIGGFLVVGAAAHAAIFMV), 433–455 (AIISHLNWVCIFLGFHSFGLYIH), and 531–549 (FLVHHIHAFTIHVTVLILL). Residues C573 and C582 each coordinate [4Fe-4S] cluster. 2 consecutive transmembrane segments (helical) span residues 589-610 (HVFLGLFWMYNAISVVIFHFSW) and 664-686 (LSAYGLLFLGAHFVWAFSLMFLF). A chlorophyll a'-binding site is contributed by H675. Chlorophyll a contacts are provided by M683 and Y691. W692 lines the phylloquinone pocket. A helical membrane pass occupies residues 724-744 (AVGVAHYLLGGIATTWAFFLA).

It belongs to the PsaA/PsaB family. In terms of assembly, the PsaA/B heterodimer binds the P700 chlorophyll special pair and subsequent electron acceptors. PSI consists of a core antenna complex that captures photons, and an electron transfer chain that converts photonic excitation into a charge separation. The eukaryotic PSI reaction center is composed of at least 11 subunits. P700 is a chlorophyll a/chlorophyll a' dimer, A0 is one or more chlorophyll a, A1 is one or both phylloquinones and FX is a shared 4Fe-4S iron-sulfur center. is required as a cofactor.

Its subcellular location is the plastid. It is found in the chloroplast thylakoid membrane. It carries out the reaction reduced [plastocyanin] + hnu + oxidized [2Fe-2S]-[ferredoxin] = oxidized [plastocyanin] + reduced [2Fe-2S]-[ferredoxin]. Functionally, psaA and PsaB bind P700, the primary electron donor of photosystem I (PSI), as well as the electron acceptors A0, A1 and FX. PSI is a plastocyanin-ferredoxin oxidoreductase, converting photonic excitation into a charge separation, which transfers an electron from the donor P700 chlorophyll pair to the spectroscopically characterized acceptors A0, A1, FX, FA and FB in turn. Oxidized P700 is reduced on the lumenal side of the thylakoid membrane by plastocyanin. This chain is Photosystem I P700 chlorophyll a apoprotein A1, found in Physcomitrium patens (Spreading-leaved earth moss).